Here is a 244-residue protein sequence, read N- to C-terminus: WUSCHEL-related homeobox 3 (244 aa).

Positions 4 to 68 (VASTRWCPTP…NHKARDRQKL (65 aa)) form a DNA-binding region, homeobox; WUS-type.

Belongs to the WUS homeobox family. Expressed in aerial parts of seedlings, inflorescences and flowers at low level. Expressed in a restricted number of L1 cells at the lateral regions of flower primordia.

The protein localises to the nucleus. In terms of biological role, probable transcription factor required to initiate organ founder cells in a lateral domain of shoot meristems. Involved in the lateral sepal axis-dependent development of flowers, probably by regulating the proliferation of L1 cells at the lateral region of flower primordia. Required for the formation of the margin cells of the first and second whorl organs. The protein is WUSCHEL-related homeobox 3 (WOX3) of Arabidopsis thaliana (Mouse-ear cress).